A 36-amino-acid polypeptide reads, in one-letter code: Photosystem I reaction center subunit VIII (36 aa).

The helical transmembrane segment at Pro-7–Tyr-29 threads the bilayer.

The protein belongs to the PsaI family.

Its subcellular location is the plastid. The protein resides in the chloroplast thylakoid membrane. In terms of biological role, may help in the organization of the PsaL subunit. In Adiantum capillus-veneris (Maidenhair fern), this protein is Photosystem I reaction center subunit VIII.